Consider the following 1068-residue polypeptide: Transcription factor PDR1 (1068 aa).

The segment at 1 to 38 is disordered; that stretch reads MRGLTPKNGVHIETGPDTESSADSSNFSTGFSGKIRKP. Positions 17 to 31 are enriched in polar residues; sequence DTESSADSSNFSTGF. Ser21 carries the post-translational modification Phosphoserine. The segment at residues 46 to 72 is a DNA-binding region (zn(2)-C6 fungal-type); it reads CDNCRKRKIKCNGKFPCASCEIYSCEC. Disordered stretches follow at residues 95 to 120 and 133 to 166; these read TVQV…DGPC and KLGG…SESQ. Positions 104 to 114 are enriched in polar residues; the sequence is SSSTSFSNPQR. Residues 135 to 146 are compositionally biased toward low complexity; sequence GGRSSGDNSGSD. Phosphoserine is present on residues Ser930, Ser942, and Ser948. A disordered region spans residues 1005 to 1029; it reads NTNEINNNNNNNNNNKNNINNINNN. Residues 1054–1062 carry the 9aaTAD motif; the sequence is EDLYSILWS.

Its subcellular location is the nucleus. Functionally, positive regulator of proteins involved in permeability. PDR1 and PDR3 jointly control the transcription level of both SNQ2 and PDR5. This Saccharomyces cerevisiae (strain ATCC 204508 / S288c) (Baker's yeast) protein is Transcription factor PDR1 (PDR1).